The chain runs to 132 residues: Small ribosomal subunit protein bS6 (132 aa).

Residues 96-132 are disordered; sequence HAEGPSIQMQKRDERERGDRGDRPDRGDRGERGGFRR. The span at 105–132 shows a compositional bias: basic and acidic residues; that stretch reads QKRDERERGDRGDRPDRGDRGERGGFRR.

It belongs to the bacterial ribosomal protein bS6 family.

Functionally, binds together with bS18 to 16S ribosomal RNA. This is Small ribosomal subunit protein bS6 from Cereibacter sphaeroides (strain ATCC 17025 / ATH 2.4.3) (Rhodobacter sphaeroides).